Consider the following 643-residue polypeptide: Replication protein E1 (643 aa).

Residues 81–83 carry the Nuclear localization signal motif; that stretch reads KRK. Phosphoserine; by host is present on residues S87, S91, and S105. The short motif at 104 to 113 is the Nuclear export signal element; the sequence is ISPRLDAITL. A disordered region spans residues 130 to 166; it reads LTDSGYGNTEVEAETQVERNGEPEDCGGGGQGRDTEG. Residues 181–347 form a DNA-binding region region; it reads QQHTGTTRVL…QTIVEHGLAD (167 aa). Positions 446 to 596 constitute an SF3 helicase domain; sequence IEFIPFLTKL…FPFDRNGNAL (151 aa). 472 to 479 serves as a coordination point for ATP; that stretch reads GPPDTGKS. K553 is covalently cross-linked (Glycyl lysine isopeptide (Lys-Gly) (interchain with G-Cter in SUMO)).

This sequence belongs to the papillomaviridae E1 protein family. As to quaternary structure, can form hexamers. Interacts with E2 protein; this interaction increases E1 DNA binding specificity. Interacts with host DNA polymerase subunit POLA2. Interacts with host single stranded DNA-binding protein RPA1. Interacts with host TOP1; this interaction stimulates the enzymatic activity of TOP1. Post-translationally, phosphorylated. In terms of processing, sumoylated.

It localises to the host nucleus. It catalyses the reaction Couples ATP hydrolysis with the unwinding of duplex DNA by translocating in the 3'-5' direction.. The catalysed reaction is ATP + H2O = ADP + phosphate + H(+). Functionally, ATP-dependent DNA 3'-5' helicase required for initiation of viral DNA replication. It forms a complex with the viral E2 protein. The E1-E2 complex binds to the replication origin which contains binding sites for both proteins. During the initial step, a dimer of E1 interacts with a dimer of protein E2 leading to a complex that binds the viral origin of replication with high specificity. Then, a second dimer of E1 displaces the E2 dimer in an ATP-dependent manner to form the E1 tetramer. Following this, two E1 monomers are added to each half of the site, which results in the formation of two E1 trimers on the viral ori. Subsequently, two hexamers will be created. The double hexamer acts as a bi-directional helicase machinery and unwinds the viral DNA and then recruits the host DNA polymerase to start replication. In Homo sapiens (Human), this protein is Replication protein E1.